A 341-amino-acid polypeptide reads, in one-letter code: Basic membrane protein B (341 aa).

A signal peptide spans 1-14 (MRIAIFIFGILLTS). Cys15 carries N-palmitoyl cysteine lipidation. Cys15 is lipidated: S-diacylglycerol cysteine.

It belongs to the BMP lipoprotein family. In terms of assembly, monomer.

The protein localises to the cell inner membrane. In terms of biological role, may be part of an ABC-type nucleoside uptake system involved in the purine salvage pathway. The chain is Basic membrane protein B (bmpB) from Borreliella afzelii (strain PKo) (Borrelia afzelii).